Reading from the N-terminus, the 260-residue chain is HLA class II histocompatibility antigen, DP alpha 1 chain (260 aa).

The signal sequence occupies residues 1-28; the sequence is MRPEDRMFHIRAVILRALSLAFLLSLRG. The tract at residues 29–115 is alpha-1; that stretch reads AGAIKADHVS…QRSNHTQATN (87 aa). At 29 to 222 the chain is on the extracellular side; that stretch reads AGAIKADHVS…EPIQMPETTE (194 aa). N-linked (GlcNAc...) asparagine glycans are attached at residues asparagine 109 and asparagine 149. The segment at 116 to 209 is alpha-2; it reads DPPEVTVFPK…GLDQPLLKHW (94 aa). The Ig-like C1-type domain occupies 118 to 210; sequence PEVTVFPKEP…LDQPLLKHWE (93 aa). Residues cysteine 138 and cysteine 194 are joined by a disulfide bond. Residues 210-222 are connecting peptide; that stretch reads EAQEPIQMPETTE. A helical membrane pass occupies residues 223 to 245; sequence TVLCALGLVLGLVGIIVGTVLII. The Cytoplasmic portion of the chain corresponds to 246 to 260; sequence KSLRSGHDPRAQGTL.

Belongs to the MHC class II family. Heterodimer of an alpha and a beta subunit; also referred as MHC class II molecule. In the endoplasmic reticulum (ER) it forms a heterononamer; 3 MHC class II molecules bind to a CD74 homotrimer (also known as invariant chain or HLA class II histocompatibility antigen gamma chain). In the endosomal/lysosomal system; CD74 undergoes sequential degradation by various proteases; leaving a small fragment termed CLIP on each MHC class II molecule. MHC class II molecule interacts with HLA_DM, and HLA_DO in B-cells, in order to release CLIP and facilitate the binding of antigenic peptides.

It localises to the cell membrane. Its subcellular location is the endoplasmic reticulum membrane. It is found in the golgi apparatus. The protein resides in the trans-Golgi network membrane. The protein localises to the endosome membrane. It localises to the lysosome membrane. Functionally, binds peptides derived from antigens that access the endocytic route of antigen presenting cells (APC) and presents them on the cell surface for recognition by the CD4 T-cells. The peptide binding cleft accommodates peptides of 10-30 residues. The peptides presented by MHC class II molecules are generated mostly by degradation of proteins that access the endocytic route, where they are processed by lysosomal proteases and other hydrolases. Exogenous antigens that have been endocytosed by the APC are thus readily available for presentation via MHC II molecules, and for this reason this antigen presentation pathway is usually referred to as exogenous. As membrane proteins on their way to degradation in lysosomes as part of their normal turn-over are also contained in the endosomal/lysosomal compartments, exogenous antigens must compete with those derived from endogenous components. Autophagy is also a source of endogenous peptides, autophagosomes constitutively fuse with MHC class II loading compartments. In addition to APCs, other cells of the gastrointestinal tract, such as epithelial cells, express MHC class II molecules and CD74 and act as APCs, which is an unusual trait of the GI tract. To produce a MHC class II molecule that presents an antigen, three MHC class II molecules (heterodimers of an alpha and a beta chain) associate with a CD74 trimer in the ER to form a heterononamer. Soon after the entry of this complex into the endosomal/lysosomal system where antigen processing occurs, CD74 undergoes a sequential degradation by various proteases, including CTSS and CTSL, leaving a small fragment termed CLIP (class-II-associated invariant chain peptide). The removal of CLIP is facilitated by HLA-DM via direct binding to the alpha-beta-CLIP complex so that CLIP is released. HLA-DM stabilizes MHC class II molecules until primary high affinity antigenic peptides are bound. The MHC II molecule bound to a peptide is then transported to the cell membrane surface. In B-cells, the interaction between HLA-DM and MHC class II molecules is regulated by HLA-DO. Primary dendritic cells (DCs) also to express HLA-DO. Lysosomal microenvironment has been implicated in the regulation of antigen loading into MHC II molecules, increased acidification produces increased proteolysis and efficient peptide loading. This chain is HLA class II histocompatibility antigen, DP alpha 1 chain (HLA-DPA1), found in Homo sapiens (Human).